We begin with the raw amino-acid sequence, 214 residues long: Killer cell lectin-like receptor subfamily B member 1 (214 aa).

Residues 1-42 (MDAPVLYAELHLANTQGLRCTSPPSPRQDACWGSGWHRVALK) are Cytoplasmic-facing. Residues 43-63 (LGCVGLILLLMGLSVLVGFLV) traverse the membrane as a helical; Signal-anchor for type II membrane protein segment. The Extracellular segment spans residues 64 to 214 (QKPPIEKCSV…WICQKTLKRV (151 aa)). Residues 98-208 (HWNKCLFISQ…CSSDNHWICQ (111 aa)) form the C-type lectin domain. 2 disulfide bridges follow: Cys-119–Cys-207 and Cys-186–Cys-199.

The protein localises to the membrane. This is Killer cell lectin-like receptor subfamily B member 1 (Klrb1) from Rattus norvegicus (Rat).